Reading from the N-terminus, the 434-residue chain is GTPase Obg (434 aa).

The Obg domain maps to 1–158; the sequence is MFLDTAKIKV…RELQLELKIL (158 aa). The region spanning 159–336 is the OBG-type G domain; that stretch reads ADVGLVGFPS…LLDATAELLD (178 aa). Residues 165–172, 190–194, 212–215, 282–285, and 317–319 contribute to the GTP site; these read GFPSVGKS, FTTIV, DLPG, NKMD, and SGL. Residues S172 and T192 each coordinate Mg(2+). One can recognise an OCT domain in the interval 356–434; the sequence is GFDEEEKAFE…IGKFEFEFVD (79 aa).

The protein belongs to the TRAFAC class OBG-HflX-like GTPase superfamily. OBG GTPase family. As to quaternary structure, monomer. Mg(2+) is required as a cofactor.

The protein localises to the cytoplasm. In terms of biological role, an essential GTPase which binds GTP, GDP and possibly (p)ppGpp with moderate affinity, with high nucleotide exchange rates and a fairly low GTP hydrolysis rate. Plays a role in control of the cell cycle, stress response, ribosome biogenesis and in those bacteria that undergo differentiation, in morphogenesis control. The chain is GTPase Obg from Streptococcus pneumoniae (strain Hungary19A-6).